Reading from the N-terminus, the 78-residue chain is Large ribosomal subunit protein bL28 (78 aa).

The tract at residues 1–24 (MSKVCQVTGKRPASGNNVSHAHNK) is disordered.

Belongs to the bacterial ribosomal protein bL28 family.

In Nitrosococcus oceani (strain ATCC 19707 / BCRC 17464 / JCM 30415 / NCIMB 11848 / C-107), this protein is Large ribosomal subunit protein bL28.